A 601-amino-acid polypeptide reads, in one-letter code: Elongation factor 4 (601 aa).

In terms of domain architecture, tr-type G spans 7-189 (SLIRNFSIIA…ALVTRLPPPV (183 aa)). Residues 19–24 (DHGKST) and 136–139 (NKVD) contribute to the GTP site.

This sequence belongs to the TRAFAC class translation factor GTPase superfamily. Classic translation factor GTPase family. LepA subfamily.

The protein resides in the cell inner membrane. The enzyme catalyses GTP + H2O = GDP + phosphate + H(+). Its function is as follows. Required for accurate and efficient protein synthesis under certain stress conditions. May act as a fidelity factor of the translation reaction, by catalyzing a one-codon backward translocation of tRNAs on improperly translocated ribosomes. Back-translocation proceeds from a post-translocation (POST) complex to a pre-translocation (PRE) complex, thus giving elongation factor G a second chance to translocate the tRNAs correctly. Binds to ribosomes in a GTP-dependent manner. The protein is Elongation factor 4 of Gluconacetobacter diazotrophicus (strain ATCC 49037 / DSM 5601 / CCUG 37298 / CIP 103539 / LMG 7603 / PAl5).